A 304-amino-acid polypeptide reads, in one-letter code: MGIDFLFILKALIIAIVEGLTEFVPVSSTGHMILVGDLIHFNTQSGGFPEMYEVVIQLGAILAVVVLYWRKISSSVVEFLSYIFSFIGLKTSGDKRKYEKRLAESETGFRFGINVIIGTIPAAILGLLFHDEIKEYLFSTKTVAIGFIVGGILLIVIENNFRKRAKRSKIVKDIDKMTYGQSLLVGCFQCLSLWPGMSRSASTIMGGWISGLSTTVATEFTFFLAIPAMVGASGLDLFKFDYSQMNATNWISLILGFIVAFIVSLVVIDKFINYLKKKPMRVFAIYRVFAGIVLAILIFTKVIS.

The next 8 helical transmembrane spans lie at 5–25 (FLFILKALIIAIVEGLTEFVP), 47–67 (GFPEMYEVVIQLGAILAVVVL), 72–92 (ISSSVVEFLSYIFSFIGLKTS), 111–131 (FGINVIIGTIPAAILGLLFHD), 137–157 (LFSTKTVAIGFIVGGILLIVI), 209–231 (ISGLSTTVATEFTFFLAIPAMVG), 248–268 (TNWISLILGFIVAFIVSLVVI), and 283–303 (FAIYRVFAGIVLAILIFTKVI).

The protein belongs to the UppP family.

The protein localises to the cell membrane. It catalyses the reaction di-trans,octa-cis-undecaprenyl diphosphate + H2O = di-trans,octa-cis-undecaprenyl phosphate + phosphate + H(+). Catalyzes the dephosphorylation of undecaprenyl diphosphate (UPP). Confers resistance to bacitracin. The chain is Undecaprenyl-diphosphatase from Clostridium perfringens (strain 13 / Type A).